The sequence spans 158 residues: Cyclic pyranopterin monophosphate synthase (158 aa).

Residues 74-76 (MCH) and 112-113 (ME) each bind substrate. The active site involves Asp127.

Belongs to the MoaC family. In terms of assembly, homohexamer; trimer of dimers.

It carries out the reaction (8S)-3',8-cyclo-7,8-dihydroguanosine 5'-triphosphate = cyclic pyranopterin phosphate + diphosphate. It functions in the pathway cofactor biosynthesis; molybdopterin biosynthesis. Its function is as follows. Catalyzes the conversion of (8S)-3',8-cyclo-7,8-dihydroguanosine 5'-triphosphate to cyclic pyranopterin monophosphate (cPMP). The polypeptide is Cyclic pyranopterin monophosphate synthase (Helicobacter pylori (strain ATCC 700392 / 26695) (Campylobacter pylori)).